Here is a 346-residue protein sequence, read N- to C-terminus: Probable 3-hydroxyacyl-CoA dehydrogenase (346 aa).

Positions 322-346 (RANLSPSATPCTPWKARKATSCAPP) are disordered.

This sequence belongs to the 3-hydroxyacyl-CoA dehydrogenase family.

It catalyses the reaction a (3S)-3-hydroxyacyl-CoA + NAD(+) = a 3-oxoacyl-CoA + NADH + H(+). This Deinococcus radiodurans (strain ATCC 13939 / DSM 20539 / JCM 16871 / CCUG 27074 / LMG 4051 / NBRC 15346 / NCIMB 9279 / VKM B-1422 / R1) protein is Probable 3-hydroxyacyl-CoA dehydrogenase.